Reading from the N-terminus, the 320-residue chain is ATP-dependent 6-phosphofructokinase (320 aa).

G12 lines the ATP pocket. Residues 22–26 (RGVVR) and 55–60 (RYSVSD) contribute to the ADP site. Residues 73-74 (RF) and 103-106 (GDGS) contribute to the ATP site. D104 contributes to the Mg(2+) binding site. 126–128 (TID) is a substrate binding site. Catalysis depends on D128, which acts as the Proton acceptor. An ADP-binding site is contributed by R155. Substrate contacts are provided by residues R163 and 170–172 (MGR). ADP-binding positions include 186-188 (GCE), K212, and 214-216 (KKH). Residues E223, R244, and 250-253 (HIQR) contribute to the substrate site.

It belongs to the phosphofructokinase type A (PFKA) family. ATP-dependent PFK group I subfamily. Prokaryotic clade 'B1' sub-subfamily. As to quaternary structure, homotetramer. Mg(2+) is required as a cofactor.

It localises to the cytoplasm. The catalysed reaction is beta-D-fructose 6-phosphate + ATP = beta-D-fructose 1,6-bisphosphate + ADP + H(+). Its pathway is carbohydrate degradation; glycolysis; D-glyceraldehyde 3-phosphate and glycerone phosphate from D-glucose: step 3/4. Its activity is regulated as follows. Allosterically activated by ADP and other diphosphonucleosides, and allosterically inhibited by phosphoenolpyruvate. Functionally, catalyzes the phosphorylation of D-fructose 6-phosphate to fructose 1,6-bisphosphate by ATP, the first committing step of glycolysis. The protein is ATP-dependent 6-phosphofructokinase of Buchnera aphidicola subsp. Baizongia pistaciae (strain Bp).